A 217-amino-acid chain; its full sequence is 3,4-dihydroxy-2-butanone 4-phosphate synthase (217 aa).

D-ribulose 5-phosphate contacts are provided by residues 37–38 (RE), D42, 150–154 (RGGHT), and E174. E38 provides a ligand contact to Mg(2+). Position 153 (H153) interacts with Mg(2+).

The protein belongs to the DHBP synthase family. As to quaternary structure, homodimer. Mg(2+) serves as cofactor. Mn(2+) is required as a cofactor.

The enzyme catalyses D-ribulose 5-phosphate = (2S)-2-hydroxy-3-oxobutyl phosphate + formate + H(+). It participates in cofactor biosynthesis; riboflavin biosynthesis; 2-hydroxy-3-oxobutyl phosphate from D-ribulose 5-phosphate: step 1/1. Catalyzes the conversion of D-ribulose 5-phosphate to formate and 3,4-dihydroxy-2-butanone 4-phosphate. In Escherichia fergusonii (strain ATCC 35469 / DSM 13698 / CCUG 18766 / IAM 14443 / JCM 21226 / LMG 7866 / NBRC 102419 / NCTC 12128 / CDC 0568-73), this protein is 3,4-dihydroxy-2-butanone 4-phosphate synthase.